Consider the following 24-residue polypeptide: Aldehyde dehydrogenase gamma chain (24 aa).

As to quaternary structure, heterotrimer composed of an alpha, a beta and a gamma chain. [2Fe-2S] cluster is required as a cofactor.

The catalysed reaction is an aldehyde + a quinone + H2O = a quinol + a carboxylate + H(+). This Comamonas testosteroni (Pseudomonas testosteroni) protein is Aldehyde dehydrogenase gamma chain.